Here is a 239-residue protein sequence, read N- to C-terminus: Ribonuclease PH (239 aa).

Residues arginine 86 and 124-126 (GTR) contribute to the phosphate site.

It belongs to the RNase PH family. As to quaternary structure, homohexameric ring arranged as a trimer of dimers.

It carries out the reaction tRNA(n+1) + phosphate = tRNA(n) + a ribonucleoside 5'-diphosphate. Functionally, phosphorolytic 3'-5' exoribonuclease that plays an important role in tRNA 3'-end maturation. Removes nucleotide residues following the 3'-CCA terminus of tRNAs; can also add nucleotides to the ends of RNA molecules by using nucleoside diphosphates as substrates, but this may not be physiologically important. Probably plays a role in initiation of 16S rRNA degradation (leading to ribosome degradation) during starvation. The sequence is that of Ribonuclease PH from Rhizobium etli (strain ATCC 51251 / DSM 11541 / JCM 21823 / NBRC 15573 / CFN 42).